A 100-amino-acid chain; its full sequence is Small ribosomal subunit protein uS14c (100 aa).

The protein belongs to the universal ribosomal protein uS14 family. Part of the 30S ribosomal subunit.

Its subcellular location is the plastid. It is found in the chloroplast. Functionally, binds 16S rRNA, required for the assembly of 30S particles. The polypeptide is Small ribosomal subunit protein uS14c (Stigeoclonium helveticum (Green alga)).